A 497-amino-acid polypeptide reads, in one-letter code: Casein kinase I isoform delta (497 aa).

2 disordered regions span residues 1–58 (MATM…EEMN) and 86–109 (PIQQ…HPTQ). Positions 14 to 34 (WHNNTSTPMDTTEPATNSHNP) are enriched in polar residues. Residues 88–105 (QQHQQPPLLQQAQPSQIP) are compositionally biased toward low complexity. The Protein kinase domain maps to 191–458 (FRLGRKIGSG…YLRNLFRTLF (268 aa)). ATP contacts are provided by residues 197-205 (IGSGSFGDI) and Lys220. Asp310 functions as the Proton acceptor in the catalytic mechanism.

The protein belongs to the protein kinase superfamily. CK1 Ser/Thr protein kinase family. Casein kinase I subfamily. In terms of assembly, monomer. In terms of tissue distribution, expressed throughout larval development and into the adult stage in both hypodermal seam cells and the hermaphrodite specific neuron.

Its subcellular location is the cytoplasm. It localises to the nucleus. The protein localises to the chromosome. It is found in the centromere. The protein resides in the cell junction. Its subcellular location is the adherens junction. It catalyses the reaction L-seryl-[protein] + ATP = O-phospho-L-seryl-[protein] + ADP + H(+). The enzyme catalyses L-threonyl-[protein] + ATP = O-phospho-L-threonyl-[protein] + ADP + H(+). Its activity is regulated as follows. Exhibits substrate-dependent heparin activation. Functionally, essential serine/threonine-protein kinase that regulates diverse cellular growth and survival processes including Wnt signaling, DNA repair and circadian rhythms. Casein kinases are operationally defined by their preferential utilization of acidic proteins. Positively regulates the expression of components of the heterochronic pathway, which regulate developmental timing, such as the transcriptional repressor lin-42 and microRNAs such as let-7. Negatively regulates cell cycle exit and cell fusion to prevent the premature differentiation of hypodermal seam cells into adult cells. Plays a role in regulating axon branching and subsequently, the maturation of the nervous system, most likely by preventing the premature termination of transcripts for proteins such as Ankyrin/unc-44, which are required for maintaining the nervous system. May phosphorylate ssup-72 to promote nervous system maturation. This Caenorhabditis elegans protein is Casein kinase I isoform delta.